Consider the following 117-residue polypeptide: Large ribosomal subunit protein bL20c (117 aa).

The protein belongs to the bacterial ribosomal protein bL20 family.

The protein localises to the plastid. It is found in the chloroplast. In terms of biological role, binds directly to 23S ribosomal RNA and is necessary for the in vitro assembly process of the 50S ribosomal subunit. It is not involved in the protein synthesizing functions of that subunit. This is Large ribosomal subunit protein bL20c from Olimarabidopsis pumila (Dwarf rocket).